Reading from the N-terminus, the 361-residue chain is UDP-N-acetylglucosamine--N-acetylmuramyl-(pentapeptide) pyrophosphoryl-undecaprenol N-acetylglucosamine transferase (361 aa).

Residues 11-13 (TGG), N120, R161, S188, and Q282 each bind UDP-N-acetyl-alpha-D-glucosamine.

It belongs to the glycosyltransferase 28 family. MurG subfamily.

The protein localises to the cell inner membrane. It catalyses the reaction di-trans,octa-cis-undecaprenyl diphospho-N-acetyl-alpha-D-muramoyl-L-alanyl-D-glutamyl-meso-2,6-diaminopimeloyl-D-alanyl-D-alanine + UDP-N-acetyl-alpha-D-glucosamine = di-trans,octa-cis-undecaprenyl diphospho-[N-acetyl-alpha-D-glucosaminyl-(1-&gt;4)]-N-acetyl-alpha-D-muramoyl-L-alanyl-D-glutamyl-meso-2,6-diaminopimeloyl-D-alanyl-D-alanine + UDP + H(+). The protein operates within cell wall biogenesis; peptidoglycan biosynthesis. Functionally, cell wall formation. Catalyzes the transfer of a GlcNAc subunit on undecaprenyl-pyrophosphoryl-MurNAc-pentapeptide (lipid intermediate I) to form undecaprenyl-pyrophosphoryl-MurNAc-(pentapeptide)GlcNAc (lipid intermediate II). This Prochlorococcus marinus (strain MIT 9303) protein is UDP-N-acetylglucosamine--N-acetylmuramyl-(pentapeptide) pyrophosphoryl-undecaprenol N-acetylglucosamine transferase.